Reading from the N-terminus, the 363-residue chain is Pyrimidine monooxygenase RutA (363 aa).

Residues 49–50 (IK), Asn115, Glu124, 140–141 (RY), and Ser190 contribute to the FMN site.

Belongs to the NtaA/SnaA/DszA monooxygenase family. RutA subfamily.

The enzyme catalyses uracil + FMNH2 + NADH + O2 = (Z)-3-ureidoacrylate + FMN + NAD(+) + H2O + H(+). It catalyses the reaction thymine + FMNH2 + NADH + O2 = (Z)-2-methylureidoacrylate + FMN + NAD(+) + H2O + H(+). Its function is as follows. Catalyzes the pyrimidine ring opening between N-3 and C-4 by an unusual flavin hydroperoxide-catalyzed mechanism, adding oxygen atoms in the process to yield ureidoacrylate peracid, that immediately reacts with FMN forming ureidoacrylate and FMN-N(5)-oxide. The FMN-N(5)-oxide reacts spontaneously with NADH to produce FMN. Requires the flavin reductase RutF to regenerate FMN in vivo. This Enterobacter sp. (strain 638) protein is Pyrimidine monooxygenase RutA.